An 89-amino-acid polypeptide reads, in one-letter code: Small ribosomal subunit protein uS15 (89 aa).

Residues 1-18 show a composition bias toward basic and acidic residues; sequence MSLDTAEKQKLIENHQVH. Positions 1 to 23 are disordered; sequence MSLDTAEKQKLIENHQVHPTDTG.

It belongs to the universal ribosomal protein uS15 family. Part of the 30S ribosomal subunit. Forms a bridge to the 50S subunit in the 70S ribosome, contacting the 23S rRNA.

One of the primary rRNA binding proteins, it binds directly to 16S rRNA where it helps nucleate assembly of the platform of the 30S subunit by binding and bridging several RNA helices of the 16S rRNA. Its function is as follows. Forms an intersubunit bridge (bridge B4) with the 23S rRNA of the 50S subunit in the ribosome. The chain is Small ribosomal subunit protein uS15 from Prochlorococcus marinus (strain AS9601).